The primary structure comprises 567 residues: Protein phosphatase 1 regulatory inhibitor subunit 16B (567 aa).

Positions 15–55 (EKVPTLERLRAAQKRRAQQLKKWAQYEQDLQHRKRKHERKR) form a coiled coil. Serine 69 bears the Phosphoserine mark. 4 ANK repeats span residues 100–129 (DGLT…NVNA), 133–162 (ELWT…DLLA), 228–257 (QGAT…RVDV), and 261–290 (DGWE…SLSA). Residues serine 333, serine 337, and serine 350 each carry the phosphoserine modification. The segment at 378–403 (RTSTYNGDIRETRTDQENKDPNPRLE) is disordered. The segment covering 385–403 (DIRETRTDQENKDPNPRLE) has biased composition (basic and acidic residues). Phosphoserine is present on serine 476. A compositionally biased stretch (polar residues) spans 504–515 (SSMARTGESSSE). Residues 504–525 (SSMARTGESSSEGKAPLIGGRT) form a disordered region. The stretch at 530–559 (SNGTSVYYTVTSGDPPLLKFKAPIEEMEEK) is one ANK 5 repeat. Cysteine 563 carries S-palmitoyl cysteine lipidation. A Cysteine methyl ester modification is found at cysteine 564. Cysteine 564 carries the S-farnesyl cysteine lipid modification. A propeptide spans 565 to 567 (RIS) (removed in mature form).

Interacts with PPP1CA, PPP1CB and MSN. Interacts (via its fourth ankyrin repeat) with the mature dimeric form of RPSA/LAMR1. Interacts with EEF1A1. Interacts with PTEN. Interacts with ECE1. Post-translationally, phosphorylated by PKA and, after PKA priming, by GSK3B. Phosphorylation by GSK3B reduces its association with PP1C and enhances PP1C activity. Dephosphorylation by its associated PP1C results in enhanced association with PP1C, but reduced PP1C activity.

It localises to the cell membrane. Its subcellular location is the nucleus. The protein resides in the cell projection. Functionally, regulator of protein phosphatase 1 (PP1) that acts as a positive regulator of pulmonary endothelial cell (EC) barrier function. Involved in the regulation of the PI3K/AKT signaling pathway, angiogenesis and endothelial cell proliferation. Regulates angiogenesis and endothelial cell proliferation through the control of ECE1 dephosphorylation, trafficking and activity. Protects the endothelial barrier from lipopolysaccharide (LPS)-induced vascular leakage. Involved in the regulation of endothelial cell filopodia extension. May be a downstream target for TGF-beta1 signaling cascade in endothelial cells. Involved in PKA-mediated moesin dephosphorylation which is important in EC barrier protection against thrombin stimulation. Promotes the interaction of PPP1CA with RPSA/LAMR1 and in turn facilitates the dephosphorylation of RPSA/LAMR1. Involved in the dephosphorylation of EEF1A1. The protein is Protein phosphatase 1 regulatory inhibitor subunit 16B (PPP1R16B) of Homo sapiens (Human).